We begin with the raw amino-acid sequence, 628 residues long: tRNA uridine 5-carboxymethylaminomethyl modification enzyme MnmG (628 aa).

FAD is bound by residues 14-19 (GAGHAG), V126, and S181. 273–287 (GPRYCPSIEDKVVRF) contacts NAD(+). FAD is bound at residue Q370.

This sequence belongs to the MnmG family. In terms of assembly, homodimer. Heterotetramer of two MnmE and two MnmG subunits. It depends on FAD as a cofactor.

Its subcellular location is the cytoplasm. NAD-binding protein involved in the addition of a carboxymethylaminomethyl (cmnm) group at the wobble position (U34) of certain tRNAs, forming tRNA-cmnm(5)s(2)U34. The sequence is that of tRNA uridine 5-carboxymethylaminomethyl modification enzyme MnmG from Exiguobacterium sibiricum (strain DSM 17290 / CCUG 55495 / CIP 109462 / JCM 13490 / 255-15).